A 191-amino-acid polypeptide reads, in one-letter code: Fe/S biogenesis protein NfuA (191 aa).

Cys149 and Cys152 together coordinate [4Fe-4S] cluster.

It belongs to the NfuA family. As to quaternary structure, homodimer. It depends on [4Fe-4S] cluster as a cofactor.

In terms of biological role, involved in iron-sulfur cluster biogenesis. Binds a 4Fe-4S cluster, can transfer this cluster to apoproteins, and thereby intervenes in the maturation of Fe/S proteins. Could also act as a scaffold/chaperone for damaged Fe/S proteins. This is Fe/S biogenesis protein NfuA from Salmonella choleraesuis (strain SC-B67).